We begin with the raw amino-acid sequence, 268 residues long: MNQMKIAVAGASGRMGHMLIEAILNAADATLSGALDIATSPAIGTDAAAFLGKPSGVLIESDLAKGLANADFLIDFTRPEGTLKHLEYCAAHGIKMIIGTTGFDVAGKAAIAAAAEKTAIMFAPNMSVGVNVTMKLLEMAAQNFSEGYDIEIIEAHHRNKVDAPSGTAIKMGEVIAGALGKELNDVAVWAREGVTGARDPSSIGFATVRGGDIIGDHTVLFAGDGERIEISHKSSSRVSYAHGSLRAARFLADKKTGLYDMQDVLGLR.

NAD(+) contacts are provided by residues 10-15 (GASGRM), aspartate 36, 99-101 (GTT), and 123-126 (APNM). The active-site Proton donor/acceptor is histidine 156. Histidine 157 provides a ligand contact to (S)-2,3,4,5-tetrahydrodipicolinate. Lysine 160 acts as the Proton donor in catalysis. 166 to 167 (GT) is a (S)-2,3,4,5-tetrahydrodipicolinate binding site.

The protein belongs to the DapB family.

It is found in the cytoplasm. The enzyme catalyses (S)-2,3,4,5-tetrahydrodipicolinate + NAD(+) + H2O = (2S,4S)-4-hydroxy-2,3,4,5-tetrahydrodipicolinate + NADH + H(+). It catalyses the reaction (S)-2,3,4,5-tetrahydrodipicolinate + NADP(+) + H2O = (2S,4S)-4-hydroxy-2,3,4,5-tetrahydrodipicolinate + NADPH + H(+). The protein operates within amino-acid biosynthesis; L-lysine biosynthesis via DAP pathway; (S)-tetrahydrodipicolinate from L-aspartate: step 4/4. Functionally, catalyzes the conversion of 4-hydroxy-tetrahydrodipicolinate (HTPA) to tetrahydrodipicolinate. The sequence is that of 4-hydroxy-tetrahydrodipicolinate reductase from Herminiimonas arsenicoxydans.